The following is a 247-amino-acid chain: MINIIFLHGLLGTKNDWQKVIENLPHFNCIALDLPFHGQAKDLEVTNFEDSAEYLAQQIKSAVKNGPYFLVGYSLGGRIALYYALQAQLERSNLQGVILEGANLGLKTDEEKQARFQQDFAWAQRFMQESPEKVLNDWYQQPVFSHLTTEERLQLVEKRKSNCGKNIGKMLLATSLSKQPDFSEKVRLSSLPFFYFCGERDHKFQVLAKENQIDLVTIPCAGHNSHLENSKYFSKKIENCILKIVRP.

The AB hydrolase-1 domain occupies 4–229 (IIFLHGLLGT…CAGHNSHLEN (226 aa)).

The protein belongs to the AB hydrolase superfamily. MenH family. As to quaternary structure, monomer.

It carries out the reaction 5-enolpyruvoyl-6-hydroxy-2-succinyl-cyclohex-3-ene-1-carboxylate = (1R,6R)-6-hydroxy-2-succinyl-cyclohexa-2,4-diene-1-carboxylate + pyruvate. Its pathway is quinol/quinone metabolism; 1,4-dihydroxy-2-naphthoate biosynthesis; 1,4-dihydroxy-2-naphthoate from chorismate: step 3/7. It functions in the pathway quinol/quinone metabolism; menaquinone biosynthesis. Catalyzes a proton abstraction reaction that results in 2,5-elimination of pyruvate from 2-succinyl-5-enolpyruvyl-6-hydroxy-3-cyclohexene-1-carboxylate (SEPHCHC) and the formation of 2-succinyl-6-hydroxy-2,4-cyclohexadiene-1-carboxylate (SHCHC). The polypeptide is Putative 2-succinyl-6-hydroxy-2,4-cyclohexadiene-1-carboxylate synthase (Haemophilus influenzae (strain ATCC 51907 / DSM 11121 / KW20 / Rd)).